The following is a 70-amino-acid chain: Drosomycin (70 aa).

The N-terminal stretch at 1-20 (MMQIKYLFALFAVLMLVVLG) is a signal peptide. The propeptide occupies 21–26 (ANEADA). Disulfide bonds link C28-C70, C37-C59, C45-C65, and C49-C67. N42 carries an N-linked (GlcNAc...) asparagine glycan.

As to expression, hemolymph (at protein level). Synthesized in the fat body and is secreted into the blood. In larvae, expressed in the visceral branches and posterior spiracles of the trachea.

It is found in the secreted. Its function is as follows. Possesses antifungal activity and is active against a relatively broad spectrum of filamentous fungi. It inhibits spore germination at high concentrations and at low concentrations delays growth of hyphae which subsequently exhibit abnormal morphology. Spz C-106 in the hemolymph controls expression of the antifungal peptide by acting as a ligand of Tl and inducing an intracellular signaling pathway. Part of a psh-dependent Toll pathway, which may function in activating the systematic immune response in response to localized melanization of the tracheal system. The protein is Drosomycin (Drs) of Drosophila melanogaster (Fruit fly).